A 1436-amino-acid chain; its full sequence is DNA polymerase III PolC-type (1436 aa).

An Exonuclease domain is found at 420-576; sequence YVVFDVETTG…YDTEATAYIF (157 aa).

This sequence belongs to the DNA polymerase type-C family. PolC subfamily.

Its subcellular location is the cytoplasm. It catalyses the reaction DNA(n) + a 2'-deoxyribonucleoside 5'-triphosphate = DNA(n+1) + diphosphate. Its function is as follows. Required for replicative DNA synthesis. This DNA polymerase also exhibits 3' to 5' exonuclease activity. The sequence is that of DNA polymerase III PolC-type from Staphylococcus aureus (strain MW2).